Here is a 126-residue protein sequence, read N- to C-terminus: Holo-[acyl-carrier-protein] synthase (126 aa).

Mg(2+) is bound by residues Asp9 and Glu58.

Belongs to the P-Pant transferase superfamily. AcpS family. Requires Mg(2+) as cofactor.

Its subcellular location is the cytoplasm. It catalyses the reaction apo-[ACP] + CoA = holo-[ACP] + adenosine 3',5'-bisphosphate + H(+). Its function is as follows. Transfers the 4'-phosphopantetheine moiety from coenzyme A to a Ser of acyl-carrier-protein. In Klebsiella pneumoniae subsp. pneumoniae (strain ATCC 700721 / MGH 78578), this protein is Holo-[acyl-carrier-protein] synthase.